Consider the following 389-residue polypeptide: Capreomycidine synthase (389 aa).

At Lys230 the chain carries N6-(pyridoxal phosphate)lysine.

It belongs to the class-II pyridoxal-phosphate-dependent aminotransferase family. Pyridoxal 5'-phosphate serves as cofactor.

It carries out the reaction (2S,3S)-hydroxyarginine = (2S,3R)-capreomycidine + H2O. The protein operates within antibiotic biosynthesis. Involved in the biosynthesis of capreomycidine, an unusual amino acid used by non-ribosomal peptide synthases (NRPS) to make the tuberactinomycin class of peptide antibiotic such as viomycin and capreomycin. Catalyzes the dehydration of the C3 hydroxyl of (3S)-hydroxy-(2S)-arginine and the intramolecular cyclization to yield (2S,3R)-capreomycidine. The chain is Capreomycidine synthase from Streptomyces vinaceus.